The primary structure comprises 496 residues: NAD(P)H-quinone oxidoreductase subunit 2 A, chloroplastic (496 aa).

14 helical membrane-spanning segments follow: residues 13-33 (SILPECILIFSSIGILSIDLL), 41-61 (TFWSYSISLAALAISIIILLL), 83-103 (IFRFFLLICSFLCIPLSVDYI), 110-130 (VTEFLLFVLTATLGGMFLCGA), 133-153 (LISIFVASECLALSSYLLSGY), 168-188 (LLMGGASSSILVYGFSLPYGL), 213-233 (VSIAMIFILVGIGFKLSLVPF), 245-265 (PTPVVAFFSVTSKVAALALAT), 279-299 (WHLPLEILAILSMILGNLIAV), 307-327 (MLAYSSISQIGYILIGIIAGD), 338-358 (YMLIYIFMNLGTFACITSFGL), 380-400 (LSLVLCLLSLGGIPPLAGFFG), 413-435 (LYFLVSIALFTSVISIYYYSRII), and 470-490 (MILCTIASTVPGILINPIIAI).

This sequence belongs to the complex I subunit 2 family. NDH is composed of at least 16 different subunits, 5 of which are encoded in the nucleus.

The protein resides in the plastid. It is found in the chloroplast thylakoid membrane. The enzyme catalyses a plastoquinone + NADH + (n+1) H(+)(in) = a plastoquinol + NAD(+) + n H(+)(out). It carries out the reaction a plastoquinone + NADPH + (n+1) H(+)(in) = a plastoquinol + NADP(+) + n H(+)(out). In terms of biological role, NDH shuttles electrons from NAD(P)H:plastoquinone, via FMN and iron-sulfur (Fe-S) centers, to quinones in the photosynthetic chain and possibly in a chloroplast respiratory chain. The immediate electron acceptor for the enzyme in this species is believed to be plastoquinone. Couples the redox reaction to proton translocation, and thus conserves the redox energy in a proton gradient. The protein is NAD(P)H-quinone oxidoreductase subunit 2 A, chloroplastic of Psilotum nudum (Whisk fern).